The sequence spans 383 residues: Transcription factor Sox-17-alpha (383 aa).

Disordered stretches follow at residues 1-20 (MSSP…KCSV) and 37-58 (NSLG…GKAE). A DNA-binding region (HMG box) is located at residues 61–129 (IRRPMNAFMV…QHMQDHPNYK (69 aa)). Residues 267 to 382 (GSPVQGMMGC…TAVYYCNYPS (116 aa)) form the Sox C-terminal domain. Residues 331–339 (TEFEQYLSY) carry the 9aaTAD motif. The segment at 332 to 337 (EFEQYL) is required for transcriptional activity and interaction with ctnnb1.

Interacts (via C-terminus) with ctnnb1/beta-catenin (via Armadillo repeats); this interaction is required for inhibition of wnt-signaling. As to expression, expressed throughout the deep and superficial endoderm during gastrulation. During neural and early tail bud stages, expression declines significantly in the anterior endoderm, except in the endoderm behind the cement gland. Strong expression persists in the endoderm posterior to the liver diverticulum until late tail bud stage. By late tailbud, expression is undetectable in most of the endoderm but is maintained in the presumptive gall bladder region and the extreme posterior region. In addition, expressed in endothelial cells in the head and along the flank of the embryo.

The protein resides in the nucleus. Transcription activator. Binds to the DNA sequence 5'-AACAAT-3'. All of the sox17 proteins are required for embryonic endoderm development and gastrulation movements, and show some redundancy in function. In addition, the sox17 proteins have distinct but overlapping roles in later gut development. Acts downstream of vegt-signaling in endoderm differentiation to induce a range of endodermal genes both directly (including endodermin and dhh/chh) and indirectly. Also represses wnt-responsive genes to inhibit wnt/beta-catenin signaling. The chain is Transcription factor Sox-17-alpha (sox17a) from Xenopus tropicalis (Western clawed frog).